Here is a 450-residue protein sequence, read N- to C-terminus: Phosphoglucosamine mutase (450 aa).

Catalysis depends on serine 101, which acts as the Phosphoserine intermediate. Mg(2+) is bound by residues serine 101, aspartate 243, aspartate 245, and aspartate 247. Position 101 is a phosphoserine (serine 101).

Belongs to the phosphohexose mutase family. It depends on Mg(2+) as a cofactor. In terms of processing, activated by phosphorylation.

It carries out the reaction alpha-D-glucosamine 1-phosphate = D-glucosamine 6-phosphate. Functionally, catalyzes the conversion of glucosamine-6-phosphate to glucosamine-1-phosphate. In Desulfotalea psychrophila (strain LSv54 / DSM 12343), this protein is Phosphoglucosamine mutase.